Here is a 276-residue protein sequence, read N- to C-terminus: Rhomboid protease GlpG (276 aa).

6 consecutive transmembrane segments (helical) span residues 94–114, 142–162, 169–189, 192–212, 229–249, and 250–270; these read GPVT…MQIL, ALMH…WYLG, LGSG…GYVQ, FSGP…GYVW, LIIF…GMSM, and ANGA…VDSL. The Nucleophile role is filled by serine 201. Histidine 254 is a catalytic residue.

This sequence belongs to the peptidase S54 family.

It localises to the cell inner membrane. The enzyme catalyses Cleaves type-1 transmembrane domains using a catalytic dyad composed of serine and histidine that are contributed by different transmembrane domains.. Rhomboid-type serine protease that catalyzes intramembrane proteolysis. The chain is Rhomboid protease GlpG from Escherichia coli O81 (strain ED1a).